Here is a 144-residue protein sequence, read N- to C-terminus: Granulocyte-macrophage colony-stimulating factor (144 aa).

Residues 1 to 17 form the signal peptide; it reads MWLQNLLFLGIVVYSFS. The O-linked (GalNAc...) serine glycan is linked to Ser-22. Thr-27 is a glycosylation site (O-linked (GalNAc...) threonine). 2 disulfide bridges follow: Cys-71-Cys-113 and Cys-105-Cys-138. Asn-86 carries an N-linked (GlcNAc...) asparagine glycan.

Belongs to the GM-CSF family. In terms of assembly, monomer. The signaling GM-CSF receptor complex is a dodecamer of two head-to-head hexamers of two alpha, two beta, and two ligand subunits.

Its subcellular location is the secreted. Functionally, cytokine that stimulates the growth and differentiation of hematopoietic precursor cells from various lineages, including granulocytes, macrophages, eosinophils and erythrocytes. In Rattus norvegicus (Rat), this protein is Granulocyte-macrophage colony-stimulating factor (Csf2).